Here is a 248-residue protein sequence, read N- to C-terminus: MRDYKVVVLGAGGVGKSSITVQFVQGVYVESYDPTIEDSYRKQIEVDGRACDLEILDTAGVAQFTAMRELYIKSGKGFLLVYSVTDENSLKELLALREQVLRIKDSDNVPMVLVGNKCDLEDDRVLSIEDGVKVSQDWGLVPFYETSAMYKTNVDEAFIDVVRQIMRKEAAISAEKKQQKELQKQQQQQQQEQDAEGQQQQQKSGKSKSSATQKDATADGQTDVNARLKQSINDHPKSSSGSKFCTII.

Position 10–17 (10–17 (GAGGVGKS)) interacts with GTP. The Effector region motif lies at 32-40 (YDPTIEDSY). GTP contacts are provided by residues 57–61 (DTAGV) and 116–119 (NKCD). Residues 182–248 (LQKQQQQQQQ…SSGSKFCTII (67 aa)) are disordered. Low complexity predominate over residues 184-214 (KQQQQQQQEQDAEGQQQQQKSGKSKSSATQK). Polar residues-rich tracts occupy residues 219–231 (DGQTDVNARLKQS) and 238–248 (SSSGSKFCTII). Cysteine 245 carries the post-translational modification Cysteine methyl ester. Residue cysteine 245 is the site of S-geranylgeranyl cysteine attachment. Positions 246–248 (TII) are cleaved as a propeptide — removed in mature form.

Belongs to the small GTPase superfamily. Ras family.

It localises to the cell membrane. The catalysed reaction is GTP + H2O = GDP + phosphate + H(+). Alternates between an inactive form bound to GDP and an active form bound to GTP. Activated by a guanine nucleotide-exchange factor (GEF) and inactivated by a GTPase-activating protein (GAP). In terms of biological role, ras-related protein which binds GDP/GTP and possesses intrinsic GTPase activity. Involved in both yeast and hypha development. In the yeast phase, it is required for normal (polar) bud site selection and is involved in cell morphogenesis; in the yeast-mycelial transition it is involved in germ tube emergence; and in the development of the hyphae it is involved in cell elongation. This is Ras-related protein RSR1 (RSR1) from Candida albicans (Yeast).